Reading from the N-terminus, the 1479-residue chain is Type VII secretion system protein EssC (1479 aa).

The segment at 1 to 189 (MHKLIIKYNK…ASSLIRLTQE (189 aa)) is required for substrate secretion, protein missing this segment is unstable. The Cytoplasmic portion of the chain corresponds to 1 to 229 (MHKLIIKYNK…RPPQPIQKNN (229 aa)). Residues 230 to 252 (TVIWRSIIPPLVMIALTVVIFLV) traverse the membrane as a helical segment. Residues 253–256 (RPIG) are Extracellular-facing. The helical transmembrane segment at 257–279 (IYILMMIGMSTVTIVFGITTYFS) threads the bilayer. Residues 280–1479 (EKKKYNKDVE…QAYQKIRWFK (1200 aa)) lie on the Cytoplasmic side of the membrane. 2 consecutive FtsK domains span residues 652–846 (DDIL…QDSN) and 997–1183 (QGPM…SEVS). Residues 672–679 (GTTGSGKS) and 1014–1021 (GSPGYGRT) each bind ATP. A required for substrate secretion, truncated protein is stable region spans residues 1249–1479 (MMPDEIKYED…QAYQKIRWFK (231 aa)).

The protein belongs to the EssC family. Homooligomer. Interacts with EsaE.

It is found in the cell membrane. Functionally, component of the type VII secretion system (Ess). Required for the secretion of substrates including EsxA and EsxB. However, unable to support secretion of the substrate protein EsxC. This chain is Type VII secretion system protein EssC, found in Staphylococcus aureus (strain NCTC 8325 / PS 47).